The following is a 574-amino-acid chain: Pyruvate kinase PKLR (574 aa).

A phosphoserine mark is found at Ser2, Ser19, Ser26, and Ser43. Arg116 lines the substrate pocket. Residues Asn118, Ser120, Asp156, and Thr157 each coordinate K(+). 118–121 (NFSH) contacts ATP. 2 residues coordinate ATP: Arg163 and Lys250. Phosphoserine is present on Ser292. Lys313 provides a ligand contact to substrate. Mn(2+) is bound at residue Glu315. Positions 338, 339, and 371 each coordinate substrate. Position 339 (Asp339) interacts with Mn(2+). Beta-D-fructose 1,6-bisphosphate is bound by residues 475 to 480 (TTTGRS), Trp525, Arg532, and 559 to 564 (RPGSGY).

It belongs to the pyruvate kinase family. As to quaternary structure, homotetramer. Mg(2+) is required as a cofactor. Mn(2+) serves as cofactor. It depends on K(+) as a cofactor.

The catalysed reaction is pyruvate + ATP = phosphoenolpyruvate + ADP + H(+). The protein operates within carbohydrate degradation; glycolysis; pyruvate from D-glyceraldehyde 3-phosphate: step 5/5. Its activity is regulated as follows. Allosterically activated by fructose 1,6-bisphosphate. Its function is as follows. Pyruvate kinase that catalyzes the conversion of phosphoenolpyruvate to pyruvate with the synthesis of ATP, and which plays a key role in glycolysis. In Homo sapiens (Human), this protein is Pyruvate kinase PKLR (PKLR).